A 241-amino-acid polypeptide reads, in one-letter code: 15,16-dihydrobiliverdin:ferredoxin oxidoreductase (241 aa).

The interval 16-35 is disordered; it reads RGGQPAAVPEGLEHCHSSKS.

The protein belongs to the HY2 family.

The enzyme catalyses 15,16-dihydrobiliverdin + oxidized 2[4Fe-4S]-[ferredoxin] = biliverdin IXalpha + reduced 2[4Fe-4S]-[ferredoxin] + 2 H(+). In terms of biological role, catalyzes the two-electron reduction of biliverdin IX-alpha at the C15 methine bridge. The protein is 15,16-dihydrobiliverdin:ferredoxin oxidoreductase of Synechococcus sp. (strain WH7803).